A 266-amino-acid chain; its full sequence is Trehalose-6-phosphate phosphatase (266 aa).

Residue aspartate 20 is the Nucleophile of the active site. Residues aspartate 20, aspartate 22, and aspartate 198 each coordinate Mg(2+). Aspartate 20 to aspartate 22 is a binding site for substrate.

The protein belongs to the trehalose phosphatase family. Requires Mg(2+) as cofactor. The cofactor is Mn(2+). Co(2+) serves as cofactor. It depends on Zn(2+) as a cofactor.

The catalysed reaction is alpha,alpha-trehalose 6-phosphate + H2O = alpha,alpha-trehalose + phosphate. It functions in the pathway glycan biosynthesis; trehalose biosynthesis. Its function is as follows. Removes the phosphate from trehalose 6-phosphate (Tre6P) to produce free trehalose. Also catalyzes the dephosphorylation of glucose-6-phosphate (Glu6P) and 2-deoxyglucose-6-phosphate (2dGlu6P). In Escherichia coli (strain K12), this protein is Trehalose-6-phosphate phosphatase (otsB).